Reading from the N-terminus, the 140-residue chain is Seminal plasma protein A3 (140 aa).

The N-terminal stretch at 1–25 (MALRLGLFLIWAGVSMFLQLDPVNG) is a signal peptide. 2 Fibronectin type-II domains span residues 49–93 (TKDN…YCTK) and 94–140 (NDYA…WKYC). 4 cysteine pairs are disulfide-bonded: Cys-54/Cys-78, Cys-68/Cys-91, Cys-99/Cys-125, and Cys-113/Cys-140.

The protein belongs to the seminal plasma protein family.

The protein resides in the secreted. In terms of biological role, the BSP-A proteins from seminal plasma exhibit both simulatory and inhibitory actions on the release of pituitary gonadotropins. The exact function of these proteins is not known. This chain is Seminal plasma protein A3, found in Bos taurus (Bovine).